Here is a 207-residue protein sequence, read N- to C-terminus: LexA repressor (207 aa).

Residues 33–52 constitute a DNA-binding region (H-T-H motif); it reads VKEMSETFGISHASVHDRIN. Catalysis depends on for autocatalytic cleavage activity residues serine 129 and lysine 166.

This sequence belongs to the peptidase S24 family. Homodimer.

The catalysed reaction is Hydrolysis of Ala-|-Gly bond in repressor LexA.. Its function is as follows. Represses a number of genes involved in the response to DNA damage (SOS response), including recA and lexA. In the presence of single-stranded DNA, RecA interacts with LexA causing an autocatalytic cleavage which disrupts the DNA-binding part of LexA, leading to derepression of the SOS regulon and eventually DNA repair. In Oleidesulfovibrio alaskensis (strain ATCC BAA-1058 / DSM 17464 / G20) (Desulfovibrio alaskensis), this protein is LexA repressor.